We begin with the raw amino-acid sequence, 733 residues long: MATKFPKFSQDLAQDPTTRRIWYGIATAHDFETHDGMTEENLYQKIFASHFGHLAIIFLWTSGTLFHVAWQGNFEQWIKDPLNVRPIAHAIWDPHFGQGAIDAFTQAGASNPVNIAYSGVYHWFYTIGMTTNADLYQGAVFLLILSSLFLFAGWLHLQPKFRPSLAWFKDAESRLNHHLAGLFGVSSLAWTGHLVHVAIPESRGVHVGWDNFLSVKPHPAGLMPFFTGNWGVYAQNPDTAGHVFGTSQGAGTAILTFLGGFHPQTESLWLTDIAHHHLAIAVLFIIAGHMYRTKFGIGHSIKEILNAHQPPSGKLGAGHKGLYDTVNNSLHFQLGLALASLGVITSLVAQHMYSLPSYAFIAKDYTTQAALYTHHQYIAGFLMVGAFAHGAIFFVRDYDPEANKDNVLYRMLEHKEALISHLSWVSLFLGFHTLGLYVHNDVVVAFGTPEKQILIEPVFAQFVQAASGKALYGFDVLLSNADSIASNASAAYLPGWLDAINSGSNSLFLNIGPGDFLVHHAIALGLHTTTLILVKGALDARGSKLMPDKKDFGYSFPCDGPGRGGTCDISAWDAFYLAMFWMLNTLGWLTFYWHWKHLGIWQGNVAQFNENSTYLMGWFRDYLWANSAQLINGYNPYGVNNLSVWAWMFLFGHLVWATGFMFLISWRGYWQELIETIVWAHERTPLANIVRWKDKPVALSIVQARLVGLAHFTVGYVLTYAAFLIASTSGKFG.

8 helical membrane passes run 46–69 (IFAS…FHVA), 135–158 (LYQG…LHLQ), 175–199 (LNHH…HVAI), 273–291 (IAHH…GHMY), 330–353 (LHFQ…QHMY), 369–395 (AALY…IFFV), 417–439 (ALIS…LYVH), and 516–534 (FLVH…LILV). [4Fe-4S] cluster contacts are provided by Cys-558 and Cys-567. A run of 2 helical transmembrane segments spans residues 574 to 595 (AFYL…YWHW) and 642 to 664 (LSVW…MFLI). The chlorophyll a site is built by His-653, Met-661, and Tyr-669. Phylloquinone is bound at residue Trp-670. The helical transmembrane segment at 706-726 (LVGLAHFTVGYVLTYAAFLIA) threads the bilayer.

Belongs to the PsaA/PsaB family. As to quaternary structure, the PsaA/B heterodimer binds the P700 chlorophyll special pair and subsequent electron acceptors. PSI consists of a core antenna complex that captures photons, and an electron transfer chain that converts photonic excitation into a charge separation. The cyanobacterial PSI reaction center is composed of one copy each of PsaA,B,C,D,E,F,I,J,K,L,M and X, and forms trimeric complexes. The cofactor is PSI electron transfer chain: 5 chlorophyll a, 1 chlorophyll a', 2 phylloquinones and 3 4Fe-4S clusters. PSI core antenna: 90 chlorophyll a, 22 carotenoids, 3 phospholipids and 1 galactolipid. P700 is a chlorophyll a/chlorophyll a' dimer, A0 is one or more chlorophyll a, A1 is one or both phylloquinones and FX is a shared 4Fe-4S iron-sulfur center..

It is found in the cellular thylakoid membrane. The enzyme catalyses reduced [plastocyanin] + hnu + oxidized [2Fe-2S]-[ferredoxin] = oxidized [plastocyanin] + reduced [2Fe-2S]-[ferredoxin]. In terms of biological role, psaA and PsaB bind P700, the primary electron donor of photosystem I (PSI), as well as the electron acceptors A0, A1 and FX. PSI is a plastocyanin/cytochrome c6-ferredoxin oxidoreductase, converting photonic excitation into a charge separation, which transfers an electron from the donor P700 chlorophyll pair to the spectroscopically characterized acceptors A0, A1, FX, FA and FB in turn. Oxidized P700 is reduced on the lumenal side of the thylakoid membrane by plastocyanin or cytochrome c6. The sequence is that of Photosystem I P700 chlorophyll a apoprotein A2 from Picosynechococcus sp. (strain ATCC 27264 / PCC 7002 / PR-6) (Agmenellum quadruplicatum).